The sequence spans 552 residues: Olefin beta-lactone synthetase (552 aa).

ATP is bound by residues T182–K190, T316–T321, D425, and R440.

Belongs to the ATP-dependent AMP-binding enzyme family. As to quaternary structure, monomer.

It carries out the reaction a (2R,3S)-2-alkyl-3-hydroxyalkanoate + ATP = a cis-3-alkyl-4-alkyloxetan-2-one + AMP + diphosphate. Functionally, involved in olefin biosynthesis. Catalyzes the conversion of beta-hydroxy acid substrates to beta-lactones in the presence of ATP. Can use all four stereoisomers of 2-hexyl-3-hydroxydecanoic acid. The chain is Olefin beta-lactone synthetase from Stenotrophomonas maltophilia (strain K279a).